Consider the following 196-residue polypeptide: MFASRFKVCRQILENVWQTKKLTLKQKFLISELQKQKKNKKQSDFSIQLQTIKKLSLFYGNLPIKKMQRAKTHTYIDKKNSLLFNIEKRLDVILVRLNFCSTMFQARQLISHKNICVNYKKVNIPGFQVSNGDLISIQENSLDFFKSNIRKNFQTNRIRRMKPNHLEVNYKTLKAVVLYEPQQIQFPYKIDLDLLD.

Positions 88–154 constitute an S4 RNA-binding domain; it reads KRLDVILVRL…FKSNIRKNFQ (67 aa).

This sequence belongs to the universal ribosomal protein uS4 family.

The protein localises to the mitochondrion. This is Small ribosomal subunit protein uS4m (RPS4) from Marchantia polymorpha (Common liverwort).